A 210-amino-acid polypeptide reads, in one-letter code: ATP phosphoribosyltransferase (210 aa).

This sequence belongs to the ATP phosphoribosyltransferase family. Short subfamily. Heteromultimer composed of HisG and HisZ subunits.

It is found in the cytoplasm. It catalyses the reaction 1-(5-phospho-beta-D-ribosyl)-ATP + diphosphate = 5-phospho-alpha-D-ribose 1-diphosphate + ATP. The protein operates within amino-acid biosynthesis; L-histidine biosynthesis; L-histidine from 5-phospho-alpha-D-ribose 1-diphosphate: step 1/9. Functionally, catalyzes the condensation of ATP and 5-phosphoribose 1-diphosphate to form N'-(5'-phosphoribosyl)-ATP (PR-ATP). Has a crucial role in the pathway because the rate of histidine biosynthesis seems to be controlled primarily by regulation of HisG enzymatic activity. This is ATP phosphoribosyltransferase from Petrotoga mobilis (strain DSM 10674 / SJ95).